A 254-amino-acid polypeptide reads, in one-letter code: tRNA uridine(34) hydroxylase (254 aa).

A Rhodanese domain is found at 123–217; sequence QDPNVILLDT…YLESIPESES (95 aa). Cys177 functions as the Cysteine persulfide intermediate in the catalytic mechanism.

It belongs to the TrhO family.

The catalysed reaction is uridine(34) in tRNA + AH2 + O2 = 5-hydroxyuridine(34) in tRNA + A + H2O. Functionally, catalyzes oxygen-dependent 5-hydroxyuridine (ho5U) modification at position 34 in tRNAs. The polypeptide is tRNA uridine(34) hydroxylase (Legionella pneumophila (strain Paris)).